We begin with the raw amino-acid sequence, 125 residues long: Fumarate reductase subunit D (125 aa).

A run of 3 helical transmembrane segments spans residues 30–50 (FAML…LGVI), 62–82 (AFAT…LPMW), and 105–125 (VACY…IFMI).

Belongs to the FrdD family. Part of an enzyme complex containing four subunits: a flavoprotein (FrdA), an iron-sulfur protein (FrdB), and two hydrophobic anchor proteins (FrdC and FrdD).

It localises to the cell inner membrane. Functionally, anchors the catalytic components of the fumarate reductase complex to the cell membrane, binds quinones. In Vibrio parahaemolyticus serotype O3:K6 (strain RIMD 2210633), this protein is Fumarate reductase subunit D.